Consider the following 175-residue polypeptide: EKC/KEOPS complex subunit TPRKB (175 aa).

This sequence belongs to the CGI121/TPRKB family. Component of the EKC/KEOPS complex.

It localises to the cytoplasm. It is found in the cytosol. The protein localises to the nucleus. Functionally, component of the EKC/KEOPS complex that is required for the formation of a threonylcarbamoyl group on adenosine at position 37 (t(6)A37) in tRNAs that read codons beginning with adenine. The complex is probably involved in the transfer of the threonylcarbamoyl moiety of threonylcarbamoyl-AMP (TC-AMP) to the N6 group of A37. Tprkb acts as an allosteric effector that regulates the t(6)A activity of the complex. The sequence is that of EKC/KEOPS complex subunit TPRKB from Danio rerio (Zebrafish).